A 326-amino-acid polypeptide reads, in one-letter code: Putative ribose-phosphate pyrophosphokinase 2 (326 aa).

ATP contacts are provided by residues 43-45 (DGE) and 102-103 (RQ). Mg(2+) is bound at residue His-136. Residues Asp-226 and 230-234 (NTGKT) each bind D-ribose 5-phosphate.

The protein belongs to the ribose-phosphate pyrophosphokinase family. Class I subfamily. In terms of assembly, homohexamer. The cofactor is Mg(2+).

The protein localises to the cytoplasm. The catalysed reaction is D-ribose 5-phosphate + ATP = 5-phospho-alpha-D-ribose 1-diphosphate + AMP + H(+). The protein operates within metabolic intermediate biosynthesis; 5-phospho-alpha-D-ribose 1-diphosphate biosynthesis; 5-phospho-alpha-D-ribose 1-diphosphate from D-ribose 5-phosphate (route I): step 1/1. Involved in the biosynthesis of the central metabolite phospho-alpha-D-ribosyl-1-pyrophosphate (PRPP) via the transfer of pyrophosphoryl group from ATP to 1-hydroxyl of ribose-5-phosphate (Rib-5-P). This is Putative ribose-phosphate pyrophosphokinase 2 from Streptococcus mutans serotype c (strain ATCC 700610 / UA159).